The sequence spans 501 residues: Actin nucleation-promoting factor WASL (501 aa).

Serine 2 is subject to N-acetylserine. A WH1 domain is found at leucine 31–arginine 138. 2 disordered regions span residues leucine 135–threonine 158 and serine 180–threonine 202. The span at lysine 183 to leucine 195 shows a compositional bias: basic residues. A CRIB domain is found at isoleucine 200 to glycine 213. Phosphoserine; by TNK2 is present on serine 239. Position 253 is a phosphotyrosine; by FAK1 and TNK2 (tyrosine 253). 2 disordered regions span residues glutamate 263–leucine 405 and glutamine 442–aspartate 501. Composition is skewed to pro residues over residues alanine 273 to leucine 361 and alanine 368 to leucine 387. The residue at position 304 (arginine 304) is an Omega-N-methylarginine. WH2 domains lie at asparagine 401–valine 418 and glycine 429–valine 446. Polar residues predominate over residues glutamine 442–threonine 453. Phosphoserine is present on residues serine 480 and serine 481. Residues aspartate 482 to aspartate 501 are compositionally biased toward acidic residues.

Binds actin and the Arp2/3 complex. Interacts with CDC42. Interacts with FCHSD1. Interacts with FCHSD2. Binds to SH3 domains of GRB2. Interacts with the C-terminal SH3 domain of DNMBP. Interacts with SNX9. Interacts with the WW domains of PRPF40A/FBP11. Interacts with PTK2/FAK1. Interacts with PACSIN1, PACSIN2 and PACSIN3. Interacts with NOSTRIN. Binds to TNK2. Interacts with SNX33. Interacts with NONO (via second RRM domain); the interaction is direct. Component of a multiprotein complex with NONO and SFPQ; associates with the complex via direct interaction with NONO. Post-translationally, phosphorylation at Ser-239, Tyr-253, Ser-480 and Ser-481 enhances actin polymerization activity.

The protein resides in the cytoplasm. The protein localises to the cytoskeleton. It localises to the nucleus. Regulates actin polymerization by stimulating the actin-nucleating activity of the Arp2/3 complex. Involved in various processes, such as mitosis and cytokinesis, via its role in the regulation of actin polymerization. Together with CDC42, involved in the extension and maintenance of the formation of thin, actin-rich surface projections called filopodia. In addition to its role in the cytoplasm, also plays a role in the nucleus by regulating gene transcription, probably by promoting nuclear actin polymerization. Binds to HSF1/HSTF1 and forms a complex on heat shock promoter elements (HSE) that negatively regulates HSP90 expression. Plays a role in dendrite spine morphogenesis. This Rattus norvegicus (Rat) protein is Actin nucleation-promoting factor WASL (Wasl).